The following is a 466-amino-acid chain: Signal recognition particle 54 kDa protein (466 aa).

Residues 104 to 111 (GLQGSGKT), 184 to 188 (DTAGR), and 242 to 245 (TKLD) each bind GTP. A disordered region spans residues 446–466 (QQQGGGGMGGLGGGGGLGPFG). Positions 448-466 (QGGGGMGGLGGGGGLGPFG) are enriched in gly residues.

It belongs to the GTP-binding SRP family. SRP54 subfamily. As to quaternary structure, part of the signal recognition particle protein translocation system, which is composed of SRP and FtsY. Archaeal SRP consists of a 7S RNA molecule of 300 nucleotides and two protein subunits: SRP54 and SRP19.

It localises to the cytoplasm. It catalyses the reaction GTP + H2O = GDP + phosphate + H(+). In terms of biological role, involved in targeting and insertion of nascent membrane proteins into the cytoplasmic membrane. Binds to the hydrophobic signal sequence of the ribosome-nascent chain (RNC) as it emerges from the ribosomes. The SRP-RNC complex is then targeted to the cytoplasmic membrane where it interacts with the SRP receptor FtsY. In Haloquadratum walsbyi (strain DSM 16790 / HBSQ001), this protein is Signal recognition particle 54 kDa protein.